The sequence spans 398 residues: Putative L-rhamnonate dehydratase (398 aa).

Substrate-binding residues include histidine 29 and arginine 55. The Mg(2+) site is built by aspartate 221, glutamate 247, and glutamate 274. The active-site Proton acceptor is histidine 324. Residue glutamate 344 participates in substrate binding.

The protein belongs to the mandelate racemase/muconate lactonizing enzyme family. RhamD subfamily. Mg(2+) serves as cofactor.

It catalyses the reaction L-rhamnonate = 2-dehydro-3-deoxy-L-rhamnonate + H2O. Catalyzes the dehydration of L-rhamnonate to 2-keto-3-deoxy-L-rhamnonate (KDR). This chain is Putative L-rhamnonate dehydratase, found in Caldivirga maquilingensis (strain ATCC 700844 / DSM 13496 / JCM 10307 / IC-167).